A 78-amino-acid polypeptide reads, in one-letter code: High temperature lethal protein 1 (78 aa).

Ser-2 carries the N-acetylserine modification.

As to quaternary structure, interacts directly with RSC8. Component of the two forms of the RSC complex composed of at least either RSC1 or RSC2, and ARP7, ARP9, LDB7, NPL6, RSC3, RSC30, RSC4, RSC58, RSC6, RSC8, RSC9, SFH1, STH1, HTL1 and probably RTT102. The complexes interact with histone and histone variant components of centromeric chromatin. Component of a fungal-specific module (HTL1-LDB7-NPL6-RSC3-RSC30) within the RSC complex.

The protein localises to the nucleus. In terms of biological role, required for cell cycle progression through G2/M transition at temperatures higher than 33 degrees Celsius. Component of the chromatin structure-remodeling complex (RSC), which is involved in transcription regulation and nucleosome positioning. RSC is responsible for the transfer of a histone octamer from a nucleosome core particle to naked DNA. The reaction requires ATP and involves an activated RSC-nucleosome intermediate. Remodeling reaction also involves DNA translocation, DNA twist and conformational change. As a reconfigurer of centromeric and flanking nucleosomes, RSC complex is required both for proper kinetochore function in chromosome segregation and, via a PKC1-dependent signaling pathway, for organization of the cellular cytoskeleton. When associated with the RSC complex, may act coordinately with PKC1 to regulate G2/M transition. Together with LDB7, NPL6, RSC3, RSC30 components, defines a fungal-specific module within the RSC complex that plays a role in many cellular functions including the maintenance of cell wall integrity. In Saccharomyces cerevisiae (strain ATCC 204508 / S288c) (Baker's yeast), this protein is High temperature lethal protein 1 (HTL1).